A 90-amino-acid chain; its full sequence is Small ribosomal subunit protein uS17 (90 aa).

Belongs to the universal ribosomal protein uS17 family. In terms of assembly, part of the 30S ribosomal subunit.

In terms of biological role, one of the primary rRNA binding proteins, it binds specifically to the 5'-end of 16S ribosomal RNA. This is Small ribosomal subunit protein uS17 from Treponema denticola (strain ATCC 35405 / DSM 14222 / CIP 103919 / JCM 8153 / KCTC 15104).